Reading from the N-terminus, the 358-residue chain is Biotin synthase (358 aa).

One can recognise a Radical SAM core domain in the interval 55 to 278; the sequence is NKVRIHILDN…VNPDSEIRIA (224 aa). Residues Cys70, Cys74, and Cys77 each contribute to the [4Fe-4S] cluster site. [2Fe-2S] cluster-binding residues include Cys114, Cys146, Cys206, and Arg276.

This sequence belongs to the radical SAM superfamily. Biotin synthase family. Homodimer. [4Fe-4S] cluster is required as a cofactor. The cofactor is [2Fe-2S] cluster.

It catalyses the reaction (4R,5S)-dethiobiotin + (sulfur carrier)-SH + 2 reduced [2Fe-2S]-[ferredoxin] + 2 S-adenosyl-L-methionine = (sulfur carrier)-H + biotin + 2 5'-deoxyadenosine + 2 L-methionine + 2 oxidized [2Fe-2S]-[ferredoxin]. It functions in the pathway cofactor biosynthesis; biotin biosynthesis; biotin from 7,8-diaminononanoate: step 2/2. Catalyzes the conversion of dethiobiotin (DTB) to biotin by the insertion of a sulfur atom into dethiobiotin via a radical-based mechanism. This chain is Biotin synthase, found in Leptospira borgpetersenii serovar Hardjo-bovis (strain JB197).